A 244-amino-acid chain; its full sequence is Serine-rich single-pass membrane protein 1 (244 aa).

Residues 35–55 form a helical membrane-spanning segment; that stretch reads CGTIGSFLLWYFVIVFVLMFF. 3 disordered regions span residues 65 to 114, 126 to 191, and 210 to 244; these read DKKD…PVTN, QRRA…LGSY, and LAHH…FSKF. Residues 80-94 are compositionally biased toward basic and acidic residues; the sequence is ASKETSCKRQSKDSA. Composition is skewed to polar residues over residues 96–114 and 132–142; these read DPSQ…PVTN and QSQFNEVNQNQ. Residues 161 to 176 show a composition bias toward basic and acidic residues; that stretch reads SWKESESEHHPSPDSI.

Its subcellular location is the membrane. This chain is Serine-rich single-pass membrane protein 1 (SSMEM1), found in Homo sapiens (Human).